The chain runs to 114 residues: Aspartate 1-decarboxylase (114 aa).

Ser25 (schiff-base intermediate with substrate; via pyruvic acid) is an active-site residue. A Pyruvic acid (Ser) modification is found at Ser25. Thr57 is a binding site for substrate. The active-site Proton donor is the Tyr58. Position 71–73 (71–73) interacts with substrate; it reads GAA.

Belongs to the PanD family. In terms of assembly, heterooctamer of four alpha and four beta subunits. Pyruvate is required as a cofactor. In terms of processing, is synthesized initially as an inactive proenzyme, which is activated by self-cleavage at a specific serine bond to produce a beta-subunit with a hydroxyl group at its C-terminus and an alpha-subunit with a pyruvoyl group at its N-terminus.

It is found in the cytoplasm. It carries out the reaction L-aspartate + H(+) = beta-alanine + CO2. It functions in the pathway cofactor biosynthesis; (R)-pantothenate biosynthesis; beta-alanine from L-aspartate: step 1/1. In terms of biological role, catalyzes the pyruvoyl-dependent decarboxylation of aspartate to produce beta-alanine. This Haloquadratum walsbyi (strain DSM 16790 / HBSQ001) protein is Aspartate 1-decarboxylase.